The sequence spans 294 residues: Nucleotide-binding protein CLB_3433 (294 aa).

8–15 (GLSGAGKT) contacts ATP. 59–62 (DIRG) provides a ligand contact to GTP.

Belongs to the RapZ-like family.

Functionally, displays ATPase and GTPase activities. The protein is Nucleotide-binding protein CLB_3433 of Clostridium botulinum (strain ATCC 19397 / Type A).